The following is a 507-amino-acid chain: MTVHQAPGTPGSVISLRPRYDNWIGGDWKAPAEGRYFANPTPVTGEEYTEIARSTAADIDLALDAAHAAAPAWGRTAPAERAAVLGRIADRIEQHLTELAVAEVWDNGKPIREALAADLPLAVDHFRYFAGVLRAQEGSISQLDEDTVAYHFHEPLGVVGQIIPWNFPLLMAVWKLAPALAAGNAVVLKPAEQTPVSILVLMELIADILPPGVINVVNGFGIEAGKPLAINPRIAKVAFTGETTTGRLIMQYASQNLIPVTLELGGKSPNLFFEDVAAARDDFYDKALEGFTMFALNQGEVCTCPSRALIAGGIYDGFLGDALERTRAVKQGNPLDTETMIGAQASNDQLEKILSYIDIGTAEGAKVLTGGERVDLGGSLSGGYYVAPTIFEGDNRMRIFQEEIFGPVVSVTRFDGYDDAISIANDTLYGLGAGVWTRDLSTAYRAGRAIQAGRVWTNCYHAYPAHAAFGGYKNSGIGRETHKMMLDHYQQTKNLLISYSAKGPGLF.

219–225 is a binding site for NAD(+); sequence GFGIEAG. Active-site residues include glutamate 263 and cysteine 302.

It belongs to the aldehyde dehydrogenase family. As to quaternary structure, homotetramer.

The catalysed reaction is fluoroacetaldehyde + NAD(+) + H2O = fluoroacetate + NADH + 2 H(+). In terms of biological role, catalyzes the oxidation of fluoroacetaldehyde to fluoroacetate. Has high affinity for fluoroacetate and glycolaldehyde but not for acetaldehyde. This Streptantibioticus cattleyicolor (strain ATCC 35852 / DSM 46488 / JCM 4925 / NBRC 14057 / NRRL 8057) (Streptomyces cattleya) protein is Fluoroacetaldehyde dehydrogenase.